Consider the following 351-residue polypeptide: Nicotinate-nucleotide--dimethylbenzimidazole phosphoribosyltransferase (351 aa).

Glu-317 serves as the catalytic Proton acceptor.

Belongs to the CobT family.

It carries out the reaction 5,6-dimethylbenzimidazole + nicotinate beta-D-ribonucleotide = alpha-ribazole 5'-phosphate + nicotinate + H(+). It participates in nucleoside biosynthesis; alpha-ribazole biosynthesis; alpha-ribazole from 5,6-dimethylbenzimidazole: step 1/2. In terms of biological role, catalyzes the synthesis of alpha-ribazole-5'-phosphate from nicotinate mononucleotide (NAMN) and 5,6-dimethylbenzimidazole (DMB). The chain is Nicotinate-nucleotide--dimethylbenzimidazole phosphoribosyltransferase from Bradyrhizobium sp. (strain ORS 278).